We begin with the raw amino-acid sequence, 118 residues long: MRVKNAVNAKKKRKKIMKAVKGYRGALSRRYRLAKQAYIKAKKHAYVGRKLKKRDYRKLWITRINIAARNEGLKYNELIHGLKISGININRKMLAELAVNDPESFKEYVNIAKQAIGK.

It belongs to the bacterial ribosomal protein bL20 family.

Its function is as follows. Binds directly to 23S ribosomal RNA and is necessary for the in vitro assembly process of the 50S ribosomal subunit. It is not involved in the protein synthesizing functions of that subunit. The sequence is that of Large ribosomal subunit protein bL20 from Thermosipho melanesiensis (strain DSM 12029 / CIP 104789 / BI429).